The primary structure comprises 462 residues: Argininosuccinate lyase (462 aa).

This sequence belongs to the lyase 1 family. Argininosuccinate lyase subfamily.

It is found in the cytoplasm. It catalyses the reaction 2-(N(omega)-L-arginino)succinate = fumarate + L-arginine. It participates in amino-acid biosynthesis; L-arginine biosynthesis; L-arginine from L-ornithine and carbamoyl phosphate: step 3/3. The protein is Argininosuccinate lyase of Bacillus cereus (strain ATCC 10987 / NRS 248).